Reading from the N-terminus, the 149-residue chain is Protein SprT-like (149 aa).

Residues 4 to 143 (TDYVKQVSLE…CGLCRGKLLL (140 aa)) form the SprT-like domain. H64 is a binding site for Zn(2+). Residue E65 is part of the active site. Zn(2+) is bound at residue H68.

It belongs to the SprT family. Requires Zn(2+) as cofactor.

Its subcellular location is the cytoplasm. The chain is Protein SprT-like from Streptococcus pneumoniae (strain JJA).